Consider the following 262-residue polypeptide: Endoplasmic reticulum chaperone BiP (262 aa).

Residue glycine 8–arginine 11 coordinates ATP. The segment at glutamine 53–valine 63 is interdomain linker. The substrate-binding (SBD) stretch occupies residues cysteine 64–threonine 144. Residue lysine 91 is modified to N6-succinyllysine. Arginine 136 is modified (omega-N-methylarginine). The residue at position 162 (threonine 162) is an O-AMP-threonine; alternate. A Phosphothreonine; alternate modification is found at threonine 162. N6,N6,N6-trimethyllysine; by METTL21A; in vitro is present on lysine 229. Residue lysine 229 is modified to N6,N6-dimethyllysine; alternate. Position 229 is an N6-methyllysine; alternate (lysine 229). N6-methyllysine is present on lysine 235.

The protein belongs to the heat shock protein 70 family. As to quaternary structure, monomer and homooligomer; homooligomerization via the interdomain linker inactivates the chaperone activity and acts as a storage of HSPA5/BiP molecules. Interacts with DNAJC1 (via J domain). Component of an EIF2 complex at least composed of CELF1/CUGBP1, CALR, CALR3, EIF2S1, EIF2S2, HSP90B1 and HSPA5. Part of a large chaperone multiprotein complex comprising DNAJB11, HSP90B1, HSPA5, HYOU, PDIA2, PDIA4, PDIA6, PPIB, SDF2L1, UGGT1 and very small amounts of ERP29, but not, or at very low levels, CALR nor CANX. Interacts with TMEM132A and TRIM21. May form a complex with ERLEC1, OS9, SEL1L and SYVN1. Interacts with DNAJC10. Interacts with DNAJB9/ERdj4; leading to recruit HSPA5/BiP to ERN1/IRE1. Interacts with ERN1/IRE1 (via luminal domain); the interaction takes place following interaction with DNAJB9/ERdj4 and leads to inactivate ERN1/IRE1, the interaction also competitively inhibits ERN1 interaction with MANF. Interacts directly with MANF (via SAP domain); the interaction inhibits ATP binding to HSPA5/BiP and subsequent nucleotide exchange. Interacts with EIF2AK3/PERK (via luminal domain); interaction leads to inactivate EIF2AK3/PERK. Interacts with MX1. Interacts with METTL23. Interacts with CEMIP; the interaction induces calcium leakage from the endoplasmic reticulum and cell migration. Interacts with PCSK4 form; the interaction takes place in the endoplasmic reticulum. Interacts with CIPC. Interacts with CCDC88B (via C-terminus); the interaction opposes ERN1-mediated JNK activation, protecting against apoptosis. Interacts with INPP5K; necessary for INPP5K localization at the endoplasmic reticulum. Interacts with MANF; the interaction is direct. Interacts with LOXL2; leading to activate the ERN1/IRE1-XBP1 pathway of the unfolded protein response. Interacts with CLU under stressed condition; interaction increases CLU protein stability; facilitates its retrotranslocation and redistribution to the mitochondria; cooperatively suppress stress-induced apoptosis by stabilizing mitochondrial membrane integrity. Interacts with CCDC47. Interacts with CLN3. Interacts with ELAPOR1; may regulate the function of HSPA5 in apoptosis and cell proliferation. Interacts with CASP7. Interacts with ILDR2; the interaction stabilizes ILDR2 expression. Interacts with ADAM7. Post-translationally, in unstressed cells, AMPylation at Thr-162 by FICD inactivates the chaperome activity: AMPylated form is locked in a relatively inert state and only weakly stimulated by J domain-containing proteins. In response to endoplasmic reticulum stress, de-AMPylation by the same protein, FICD, restores the chaperone activity.

Its subcellular location is the endoplasmic reticulum lumen. The protein localises to the melanosome. The protein resides in the cytoplasm. It localises to the cell surface. It carries out the reaction ATP + H2O = ADP + phosphate + H(+). Its activity is regulated as follows. The chaperone activity is regulated by ATP-induced allosteric coupling of the nucleotide-binding (NBD) and substrate-binding (SBD) domains. In the ADP-bound and nucleotide-free (apo) states, the two domains have little interaction. In contrast, in the ATP-bound state the two domains are tightly coupled, which results in drastically accelerated kinetics in both binding and release of polypeptide substrates. J domain-containing co-chaperones (DNAJB9/ERdj4 or DNAJC10/ERdj5) stimulate the ATPase activity and are required for efficient substrate recognition by HSPA5/BiP. Homooligomerization inactivates participating HSPA5/BiP protomers and probably act as reservoirs to store HSPA5/BiP molecules when they are not needed by the cell. Its function is as follows. Endoplasmic reticulum chaperone that plays a key role in protein folding and quality control in the endoplasmic reticulum lumen. Involved in the correct folding of proteins and degradation of misfolded proteins via its interaction with DNAJC10/ERdj5, probably to facilitate the release of DNAJC10/ERdj5 from its substrate. Acts as a key repressor of the EIF2AK3/PERK and ERN1/IRE1-mediated unfolded protein response (UPR). In the unstressed endoplasmic reticulum, recruited by DNAJB9/ERdj4 to the luminal region of ERN1/IRE1, leading to disrupt the dimerization of ERN1/IRE1, thereby inactivating ERN1/IRE1. Also binds and inactivates EIF2AK3/PERK in unstressed cells. Accumulation of misfolded protein in the endoplasmic reticulum causes release of HSPA5/BiP from ERN1/IRE1 and EIF2AK3/PERK, allowing their homodimerization and subsequent activation. Plays an auxiliary role in post-translational transport of small presecretory proteins across endoplasmic reticulum (ER). May function as an allosteric modulator for SEC61 channel-forming translocon complex, likely cooperating with SEC62 to enable the productive insertion of these precursors into SEC61 channel. Appears to specifically regulate translocation of precursors having inhibitory residues in their mature region that weaken channel gating. May also play a role in apoptosis and cell proliferation. The sequence is that of Endoplasmic reticulum chaperone BiP from Sus scrofa (Pig).